We begin with the raw amino-acid sequence, 312 residues long: 2-aminophenol 1,6-dioxygenase subunit beta (312 aa).

Fe cation-binding residues include His13, His62, and Glu251.

It belongs to the LigB/MhpB extradiol dioxygenase family. As to quaternary structure, the APD complex is a heterotetramer of 2 alpha (CnbCa) and 2 beta (CnbCb) subunits. It depends on Fe(2+) as a cofactor.

The enzyme catalyses 2-aminophenol + O2 = 2-aminomuconate 6-semialdehyde. The catalysed reaction is 2-amino-5-chlorophenol + O2 = 2-amino-5-chloromuconate 6-semialdehyde. It functions in the pathway xenobiotic degradation; nitrobenzene degradation. It participates in xenobiotic degradation; 4-chloronitrobenzene degradation. With respect to regulation, complete loss of activity in the presence of Ni(2+), Co(2+), Cd(2+), Zn(2+) and hydrogen peroxide, however activity with hydrogen peroxide partially restored upon addition of excess ascorbate. Partially inhibited by Fe(2+), Mg(2+), Ca(2+), Mn(2+), Cu(2+) and also by EDTA, at 2 mM concentration. Total activity inhibited in the presence of catechol or 4-nitrocatechol but completely restored after removal of catechol and addition of 2 mM Fe(2+) and 5 mM ascorbate. Functionally, component of the 2-aminophenol 1,6-dioxygenase (APD) complex that catalyzes the ring fission of 2-aminophenol to produce 2-aminomuconic semialdehyde. CnbCb seems to be the catalytic subunit of the complex. Also active on other substrates such as 2-amino-5-chlorophenol (68% activity), protocatechuate (33% activity) and catechol (5% activity). Both 2-aminophenol and 2-amino-5-cholorophenol are likely native substrates for this dioxygenase which is involved in the reductive degradation pathway of both nitrobenzene (NB) and 4-chloronitrobenzene (4-CNB), allowing C.testosteroni strain CNB-1 to grow on these compounds as sole source of carbon, nitrogen, and energy. In Comamonas testosteroni (Pseudomonas testosteroni), this protein is 2-aminophenol 1,6-dioxygenase subunit beta.